Consider the following 451-residue polypeptide: uncharacterized protein (451 aa).

The 59-residue stretch at 2 to 60 (VVKVKQKIPLKIKRMGINGEGIGFYQKTLVFVPGALKGEDIFCQITAVKRNFAEAKLLT) folds into the TRAM domain. Residues cysteine 73, cysteine 79, cysteine 82, and cysteine 162 each coordinate [4Fe-4S] cluster. The S-adenosyl-L-methionine site is built by glutamine 283, tyrosine 312, aspartate 333, and aspartate 381. The active-site Nucleophile is cysteine 408.

The protein belongs to the class I-like SAM-binding methyltransferase superfamily. RNA M5U methyltransferase family.

This is an uncharacterized protein from Streptococcus pyogenes serotype M1.